We begin with the raw amino-acid sequence, 178 residues long: Ribosome maturation factor RimP (178 aa).

The protein belongs to the RimP family.

The protein resides in the cytoplasm. In terms of biological role, required for maturation of 30S ribosomal subunits. The chain is Ribosome maturation factor RimP from Caulobacter vibrioides (strain ATCC 19089 / CIP 103742 / CB 15) (Caulobacter crescentus).